A 188-amino-acid chain; its full sequence is CASP-like protein 4B1 (188 aa).

Positions 1 to 11 (MTNPDKQKPVE) are enriched in basic and acidic residues. The segment at 1–34 (MTNPDKQKPVEVTDVETAAEKTSEPTPASGTSTI) is disordered. Residues 1–46 (MTNPDKQKPVEVTDVETAAEKTSEPTPASGTSTITQRWKREDLIKK) lie on the Cytoplasmic side of the membrane. Residues 24-34 (EPTPASGTSTI) show a composition bias toward polar residues. A helical membrane pass occupies residues 47-67 (ASPITRGICLLFSLLAFLIMV). Residues 68–84 (SNKHGYGRNFNEYEEYR) are Extracellular-facing. The chain crosses the membrane as a helical span at residues 85–105 (YVLAISIISTLYTAWQTFAHF). At 106-120 (SKREFFDRRTSTLVD) the chain is on the cytoplasmic side. Residues 121 to 141 (FSGDQIVAYLLISAASSAIPL) traverse the membrane as a helical segment. The Extracellular segment spans residues 142–156 (TNRFREGQDNIFTDS). A helical membrane pass occupies residues 157–177 (AASAISMAIFAFVALALSALF). The Cytoplasmic portion of the chain corresponds to 178–188 (SGYKLSTHSFI).

This sequence belongs to the Casparian strip membrane proteins (CASP) family. As to quaternary structure, homodimer and heterodimers.

The protein resides in the cell membrane. The sequence is that of CASP-like protein 4B1 from Arabidopsis lyrata subsp. lyrata (Lyre-leaved rock-cress).